The sequence spans 373 residues: MSTDCAGNSTCPVNSTEEDPPVGMEGHANLKLLFTVLSAVMVGLVMFSFGCSVESQKLWLHLRRPWGIAVGLLSQFGLMPLTAYLLAIGFGLKPFQAIAVLMMGSCPGGTISNVLTFWVDGDMDLSISMTTCSTVAALGMMPLCLYIYTRSWTLTQNLVIPYQSIGITLVSLVVPVASGVYVNYRWPKQATVILKVGAILGGMLLLVVAVTGMVLAKGWNTDVTLLVISCIFPLVGHVTGFLLAFLTHQSWQRCRTISIETGAQNIQLCIAMLQLSFSAEYLVQLLNFALAYGLFQVLHGLLIVAAYQAYKRRQKSKCRRQHPDCPDVCYEKQPRETSAFLDKGDEAAVTLGPVQPEQHHRAAELTSHIPSCE.

Residues 1-15 (MSTDCAGNSTCPVNS) are compositionally biased toward polar residues. The disordered stretch occupies residues 1–21 (MSTDCAGNSTCPVNSTEEDPP). Over 1-32 (MSTDCAGNSTCPVNSTEEDPPVGMEGHANLKL) the chain is Extracellular. N-linked (GlcNAc...) asparagine glycosylation is found at asparagine 8 and asparagine 14. The chain crosses the membrane as a helical span at residues 33–53 (LFTVLSAVMVGLVMFSFGCSV). Residues 54–67 (ESQKLWLHLRRPWG) lie on the Cytoplasmic side of the membrane. Residues 68–88 (IAVGLLSQFGLMPLTAYLLAI) traverse the membrane as a helical segment. The Extracellular portion of the chain corresponds to 89-97 (GFGLKPFQA). A helical transmembrane segment spans residues 98–118 (IAVLMMGSCPGGTISNVLTFW). At 119–126 (VDGDMDLS) the chain is on the cytoplasmic side. Residues 127 to 147 (ISMTTCSTVAALGMMPLCLYI) traverse the membrane as a helical segment. Residues 148-157 (YTRSWTLTQN) are Extracellular-facing. Residues 158–178 (LVIPYQSIGITLVSLVVPVAS) form a helical membrane-spanning segment. Over 179–195 (GVYVNYRWPKQATVILK) the chain is Cytoplasmic. Residues 196–216 (VGAILGGMLLLVVAVTGMVLA) form a helical membrane-spanning segment. The Extracellular segment spans residues 217-224 (KGWNTDVT). A helical transmembrane segment spans residues 225-245 (LLVISCIFPLVGHVTGFLLAF). Topologically, residues 246–265 (LTHQSWQRCRTISIETGAQN) are cytoplasmic. A helical membrane pass occupies residues 266-283 (IQLCIAMLQLSFSAEYLV). Residue glutamine 284 is a topological domain, extracellular. The chain crosses the membrane as a helical span at residues 285–305 (LLNFALAYGLFQVLHGLLIVA). The Cytoplasmic portion of the chain corresponds to 306–373 (AYQAYKRRQK…ELTSHIPSCE (68 aa)).

This sequence belongs to the bile acid:sodium symporter (BASS) (TC 2.A.28) family. In terms of processing, glycosylated. Highest expression in lung and testis, moderate expression in heart, bladder and skin, and low expression in blood, liver, stomach, small intestine, spleen, kidney, adrenal gland, seminal vesicle, preputial gland, coagulating gland, lacrimal gland/eye, and brain.

It localises to the membrane. The catalysed reaction is estrone 3-sulfate(out) + 2 Na(+)(out) = estrone 3-sulfate(in) + 2 Na(+)(in). The enzyme catalyses 17beta-estradiol 3-sulfate(out) + 2 Na(+)(out) = 17beta-estradiol 3-sulfate(in) + 2 Na(+)(in). It carries out the reaction dehydroepiandrosterone 3-sulfate(out) + 2 Na(+)(out) = dehydroepiandrosterone 3-sulfate(in) + 2 Na(+)(in). It catalyses the reaction androst-5-ene-diol 3-sulfate(out) + 2 Na(+)(out) = androst-5-ene-diol 3-sulfate(in) + 2 Na(+)(in). The catalysed reaction is pregnenolone sulfate(out) + 2 Na(+)(out) = pregnenolone sulfate(in) + 2 Na(+)(in). The enzyme catalyses taurolithocholate 3-sulfate(out) + 2 Na(+)(out) = taurolithocholate 3-sulfate(in) + 2 Na(+)(in). It carries out the reaction androsterone 3alpha-sulfate(out) + 2 Na(+)(out) = androsterone 3alpha-sulfate(in) + 2 Na(+)(in). It catalyses the reaction 5alpha-dihydrotestosterone sulfate(out) + 2 Na(+)(out) = 5alpha-dihydrotestosterone sulfate(in) + 2 Na(+)(in). The catalysed reaction is 17beta-estradiol 17-sulfate(out) + 2 Na(+)(out) = 17beta-estradiol 17-sulfate(in) + 2 Na(+)(in). The enzyme catalyses 17alpha-hydroxypregnenolone 3-sulfate(out) + 2 Na(+)(out) = 17alpha-hydroxypregnenolone 3-sulfate(in) + 2 Na(+)(in). It carries out the reaction epiandrosterone 3-sulfate(out) + 2 Na(+)(out) = epiandrosterone 3-sulfate(in) + 2 Na(+)(in). It catalyses the reaction epitestosterone 17-sulfate(out) + 2 Na(+)(out) = epitestosterone 17-sulfate(in) + 2 Na(+)(in). The catalysed reaction is testosterone 17-sulfate(out) + 2 Na(+)(out) = testosterone 17-sulfate(in) + 2 Na(+)(in). The enzyme catalyses 16alpha-hydroxydehydroepiandrosterone 3-sulfate(out) + 2 Na(+)(out) = 16alpha-hydroxydehydroepiandrosterone 3-sulfate(in) + 2 Na(+)(in). Transports sulfoconjugated steroid hormones from the extracellular compartment into the cytosol in a sodium-dependent manner without hydrolysis. Steroid sulfate hormones are commonly considered to be biologically inactive metabolites, that may be activated by steroid sulfatases into free steroids. May play an important role by delivering sulfoconjugated steroids to specific target cells in reproductive organs. May play a role transporting the estriol precursor 16alpha-hydroxydehydroepiandrosterone 3-sulfate (16a-OH-DHEAS) at the fetal blood vessel endothelium. Can also transport other sulfoconjugated molecules such as taurolithocholic acid-3-sulfate and sulfoconjugated pyrenes. The chain is Sodium-dependent organic anion transporter (Slc10a6) from Mus musculus (Mouse).